The chain runs to 109 residues: Biphenyl dioxygenase system ferredoxin subunit (109 aa).

The region spanning 4–100 (TRVCDRRDVP…IRIEDNDVLV (97 aa)) is the Rieske domain. The [2Fe-2S] cluster site is built by C43, H45, C63, and H66.

This sequence belongs to the bacterial ring-hydroxylating dioxygenase ferredoxin component family. In terms of assembly, this dioxygenase system consists of four proteins: the two subunits of the hydroxylase component (BphA and BphE), a ferredoxin (BphF) and a ferredoxin reductase (BphG).

In terms of biological role, this protein seems to be a 2Fe-2S ferredoxin. The chain is Biphenyl dioxygenase system ferredoxin subunit (bphF) from Paraburkholderia xenovorans (strain LB400).